The sequence spans 355 residues: Protein MxiC (355 aa).

The protein resides in the secreted. It localises to the host cell. Its function is as follows. Necessary for the secretion of IPA invasins. The sequence is that of Protein MxiC (mxiC) from Shigella flexneri.